The sequence spans 533 residues: Dipeptide-binding protein (533 aa).

The signal sequence occupies residues 1-24 (MRKILPLRAWLAAGLILGSPFSHA).

Belongs to the bacterial solute-binding protein 5 family.

Its subcellular location is the periplasm. Functionally, binds different dipeptides. Probably bind only L-amino acid containing dipeptides. This Pseudomonas aeruginosa (strain ATCC 15692 / DSM 22644 / CIP 104116 / JCM 14847 / LMG 12228 / 1C / PRS 101 / PAO1) protein is Dipeptide-binding protein.